Here is a 423-residue protein sequence, read N- to C-terminus: Glutamate-1-semialdehyde 2,1-aminomutase (423 aa).

Residue lysine 262 is modified to N6-(pyridoxal phosphate)lysine.

This sequence belongs to the class-III pyridoxal-phosphate-dependent aminotransferase family. HemL subfamily. Homodimer. The cofactor is pyridoxal 5'-phosphate.

It localises to the cytoplasm. It carries out the reaction (S)-4-amino-5-oxopentanoate = 5-aminolevulinate. It functions in the pathway porphyrin-containing compound metabolism; protoporphyrin-IX biosynthesis; 5-aminolevulinate from L-glutamyl-tRNA(Glu): step 2/2. This chain is Glutamate-1-semialdehyde 2,1-aminomutase, found in Campylobacter fetus subsp. fetus (strain 82-40).